Here is a 340-residue protein sequence, read N- to C-terminus: Geranylgeranyl pyrophosphate synthase atmG (340 aa).

Residues 19–48 are compositionally biased toward polar residues; the sequence is NLDASYPTSSSLSTEPIDTRSSSPQGSAST. The interval 19-51 is disordered; that stretch reads NLDASYPTSSSLSTEPIDTRSSSPQGSASTPVD. Lysine 69, arginine 72, and histidine 101 together coordinate isopentenyl diphosphate. Residues aspartate 108 and aspartate 112 each coordinate Mg(2+). Arginine 117 is a dimethylallyl diphosphate binding site. Arginine 118 contributes to the isopentenyl diphosphate binding site. Dimethylallyl diphosphate-binding residues include lysine 195, threonine 196, and glutamine 229. Residue aspartate 232 coordinates Mg(2+). Dimethylallyl diphosphate-binding residues include asparagine 236, lysine 246, and lysine 256.

Belongs to the FPP/GGPP synthase family. Mg(2+) is required as a cofactor.

The enzyme catalyses isopentenyl diphosphate + dimethylallyl diphosphate = (2E)-geranyl diphosphate + diphosphate. It carries out the reaction isopentenyl diphosphate + (2E)-geranyl diphosphate = (2E,6E)-farnesyl diphosphate + diphosphate. The catalysed reaction is isopentenyl diphosphate + (2E,6E)-farnesyl diphosphate = (2E,6E,10E)-geranylgeranyl diphosphate + diphosphate. Its function is as follows. Geranylgeranyl pyrophosphate synthase; part of the ATM1 gene cluster that mediates the biosynthesis of aflatrem, a tremorgenic mycotoxin with acute neurotoxic effects. Synthesis of geranylgeranyl diphosphate (GGPP) by AtmG (a GGPP synthase) precedes condensation of GGPP with indole 3-glycerol phosphate, followed by epoxidation and cyclization by AtmM (a FAD-dependent monooxygenase) and AtmC (a prenyltransferase) to produce paspaline. AtmB is also essential for paspaline production, but its exact role has not been identified yet. AtmP, a cytochrome P450 monooxygenase, subsequently converts paspaline to 13-desoxypaxilline via PC-M6 by removal of the C-30 methyl group and oxidation at C-10. AtmQ, a cytochrome P450 monooxygenase, then catalyzes the oxidation of 13-desoxypaxilline, first at C-7 to produce paspalicine and then at C-13 to form paspalinine. Finally, AtmD prenylates paspalinine to form aflatrem. This chain is Geranylgeranyl pyrophosphate synthase atmG, found in Aspergillus flavus.